The sequence spans 246 residues: Putative KilA-N domain-containing protein L33 (246 aa).

The KilA-N domain occupies 20 to 129; sequence RYTKCQYCDI…AKVSLWIEEW (110 aa).

This Acanthamoeba polyphaga mimivirus (APMV) protein is Putative KilA-N domain-containing protein L33.